The primary structure comprises 449 residues: Myb family transcription factor PHL6 (449 aa).

Residues 49 to 72 (PFIRSQSPDSPGQLWPKNSSQSTF) are disordered. An HTH myb-type domain is found at 238-298 (ANQKSRMRWT…HLQKYRLAKY (61 aa)). A DNA-binding region (H-T-H motif) is located at residues 269–294 (PKAVKKLMNVEGLTIYHVKSHLQKYR). Positions 301-327 (EKKEEKRTDNSEEKKLALSKSEADEKK) are disordered. Residues 334 to 354 (TEALRMQMEVQKQLHEQLEVQ) are coiled coil. The short motif at 347-352 (LHEQLE) is the LHEQLE element. The interval 376–449 (RKTGRWISSS…NIAESEDPKR (74 aa)) is disordered. A compositionally biased stretch (polar residues) spans 381–410 (WISSSSQTVLSPSDDSIPDSQNMSKTKASS).

This sequence belongs to the MYB-CC family.

It is found in the nucleus. The protein is Myb family transcription factor PHL6 of Arabidopsis thaliana (Mouse-ear cress).